Reading from the N-terminus, the 262-residue chain is uncharacterized protein (262 aa).

The ABC transporter domain occupies 5-223 (IKVENLTKYF…MAYIEYLDNG (219 aa)). 37–44 (GHNGAGKT) contacts ATP.

This sequence belongs to the ABC transporter superfamily.

This is an uncharacterized protein from Methanocaldococcus jannaschii (strain ATCC 43067 / DSM 2661 / JAL-1 / JCM 10045 / NBRC 100440) (Methanococcus jannaschii).